The primary structure comprises 359 residues: WW domain-binding protein wbp-11 (359 aa).

Disordered regions lie at residues 1–38 (MPSI…DRQQ), 235–264 (PSSY…NPMG), and 317–341 (PGDN…QKQA). Over residues 8 to 27 (KSGERYRAPTDQARKMDRKK) the composition is skewed to basic and acidic residues. Basic residues predominate over residues 245–256 (MPHHHHHHHPHA).

Its function is as follows. Activates pre-mRNA splicing. May inhibit PP1 phosphatase activity. This is WW domain-binding protein wbp-11 from Caenorhabditis elegans.